Here is a 339-residue protein sequence, read N- to C-terminus: Uroporphyrinogen decarboxylase (339 aa).

Residues 21 to 25 (RQAGR), D71, Y146, S201, and H316 contribute to the substrate site.

The protein belongs to the uroporphyrinogen decarboxylase family. In terms of assembly, homodimer.

The protein resides in the cytoplasm. It carries out the reaction uroporphyrinogen III + 4 H(+) = coproporphyrinogen III + 4 CO2. It functions in the pathway porphyrin-containing compound metabolism; protoporphyrin-IX biosynthesis; coproporphyrinogen-III from 5-aminolevulinate: step 4/4. In terms of biological role, catalyzes the decarboxylation of four acetate groups of uroporphyrinogen-III to yield coproporphyrinogen-III. This is Uroporphyrinogen decarboxylase from Rickettsia canadensis (strain McKiel).